Reading from the N-terminus, the 423-residue chain is Adenylosuccinate synthetase (423 aa).

GTP-binding positions include 13–19 (GDEGKGK) and 41–43 (GHT). Catalysis depends on Asp-14, which acts as the Proton acceptor. Positions 14 and 41 each coordinate Mg(2+). Residues 14-17 (DEGK), 39-42 (NAGH), Thr-130, Arg-144, Gln-223, Thr-238, and Arg-302 each bind IMP. The Proton donor role is filled by His-42. 298–304 (SVTGRKR) contributes to the substrate binding site. GTP is bound by residues Arg-304 and 410-412 (SVG).

The protein belongs to the adenylosuccinate synthetase family. As to quaternary structure, homodimer. Mg(2+) serves as cofactor.

The protein localises to the cytoplasm. It carries out the reaction IMP + L-aspartate + GTP = N(6)-(1,2-dicarboxyethyl)-AMP + GDP + phosphate + 2 H(+). The protein operates within purine metabolism; AMP biosynthesis via de novo pathway; AMP from IMP: step 1/2. Its function is as follows. Plays an important role in the de novo pathway of purine nucleotide biosynthesis. Catalyzes the first committed step in the biosynthesis of AMP from IMP. The chain is Adenylosuccinate synthetase from Porphyromonas gingivalis (strain ATCC BAA-308 / W83).